A 372-amino-acid chain; its full sequence is Probable E3 ubiquitin-protein ligase makorin-1 (372 aa).

C3H1-type zinc fingers lie at residues 20–45 (KHVT…HDLT) and 48–75 (KPAA…HCKP). A disordered region spans residues 78-110 (NEEFSSPQMLPPSSPSPSTDPESSQPAPRPKTQ). Low complexity predominate over residues 93–103 (SPSTDPESSQP). Residues 153–180 (ALRKQLCPYAAVGECRYGINCAYLHGDV) form a C3H1-type 3 zinc finger. The interval 181-208 (CDMCGLQVLHPTDNSQRSQHTKACIEAH) is makorin-type Cys-His. The RING-type zinc finger occupies 226–280 (CGVCMEVVFEKANPSERRFGILSNCNHCYCLKCIRKWRSAKQFESKIIKSCPECR). A C3H1-type 4 zinc finger spans residues 309 to 338 (GMGRKPCRYFDEGRGICPFGANCFYKHAFP).

It carries out the reaction S-ubiquitinyl-[E2 ubiquitin-conjugating enzyme]-L-cysteine + [acceptor protein]-L-lysine = [E2 ubiquitin-conjugating enzyme]-L-cysteine + N(6)-ubiquitinyl-[acceptor protein]-L-lysine.. It participates in protein modification; protein ubiquitination. Functionally, E3 ubiquitin ligase catalyzing the covalent attachment of ubiquitin moieties onto substrate proteins. The chain is Probable E3 ubiquitin-protein ligase makorin-1 from Tetraodon nigroviridis (Spotted green pufferfish).